The sequence spans 66 residues: Venom protein 27.1 (66 aa).

The N-terminal stretch at 1–22 is a signal peptide; the sequence is MNTKTLIVVFLVCLLVSEVVLA.

Post-translationally, contains 1 disulfide bond. In terms of tissue distribution, expressed by the venom gland.

Its subcellular location is the secreted. This Lychas mucronatus (Chinese swimming scorpion) protein is Venom protein 27.1.